We begin with the raw amino-acid sequence, 525 residues long: GMP synthase [glutamine-hydrolyzing] (525 aa).

In terms of domain architecture, Glutamine amidotransferase type-1 spans 8–207 (KILILDFGSQ…ALDICGCAAN (200 aa)). Cysteine 85 functions as the Nucleophile in the catalytic mechanism. Residues histidine 181 and glutamate 183 contribute to the active site. A GMPS ATP-PPase domain is found at 208-400 (WKPSSIIEDA…LGLPYNMLYR (193 aa)). 235–241 (SGGVDSS) is an ATP binding site.

Homodimer.

It carries out the reaction XMP + L-glutamine + ATP + H2O = GMP + L-glutamate + AMP + diphosphate + 2 H(+). The protein operates within purine metabolism; GMP biosynthesis; GMP from XMP (L-Gln route): step 1/1. Catalyzes the synthesis of GMP from XMP. The chain is GMP synthase [glutamine-hydrolyzing] from Shewanella baltica (strain OS223).